A 298-amino-acid polypeptide reads, in one-letter code: ADP/ATP translocase 2 (298 aa).

M1 is modified (N-acetylmethionine). Topologically, residues 1–7 (MTDAAVS) are mitochondrial intermembrane. An N-acetylthreonine; in ADP/ATP translocase 2, N-terminally processed modification is found at T2. Residues 6 to 98 (VSFAKDFLAG…FAFKDKYKQI (93 aa)) form a Solcar 1 repeat. S7 is modified (phosphoserine). The helical transmembrane segment at 8-37 (FAKDFLAGGVAAAISKTAVAPIERVKLLLQ) threads the bilayer. K23 is modified (N6-malonyllysine). At 38-74 (VQHASKQITADKQYKGIIDCVVRIPKEQGVLSFWRGN) the chain is on the mitochondrial matrix side. Residue K43 is modified to N6-succinyllysine. Residue K52 is modified to N6,N6,N6-trimethyllysine; alternate. An N6,N6-dimethyllysine; alternate modification is found at K52. K52 carries the post-translational modification N6-methyllysine; alternate. Residues 75–99 (LANVIRYFPTQALNFAFKDKYKQIF) form a helical membrane-spanning segment. ADP is bound by residues R80 and K92. An N6-malonyllysine mark is found at K92 and K96. Topologically, residues 100–109 (LGGVDKRTQF) are mitochondrial intermembrane. At K105 the chain carries N6-acetyllysine; alternate. At K105 the chain carries N6-succinyllysine; alternate. A helical membrane pass occupies residues 110 to 130 (WRYFAGNLASGGAAGATSLCF). Solcar repeat units lie at residues 111-201 (RYFA…AKGM) and 212-297 (ISWM…IKKY). Over 131–178 (VYPLDFARTRLAADVGKAGAEREFKGLGDCLVKIYKSDGIKGLYQGFN) the chain is Mitochondrial matrix. N6-methyllysine; alternate is present on K147. K147 and K155 each carry N6-acetyllysine; alternate. K147 and K155 each carry N6-succinyllysine; alternate. K147 is subject to N6-malonyllysine; alternate. N6-acetyllysine occurs at positions 163 and 166. A helical membrane pass occupies residues 179 to 199 (VSVQGIIIYRAAYFGIYDTAK). At 200–210 (GMLPDPKNTHI) the chain is on the mitochondrial intermembrane side. A helical transmembrane segment spans residues 211 to 231 (FISWMIAQSVTAVAGLTSYPF). At 232 to 273 (DTVRRRMMMQSGRKGTDIMYTGTLDCWRKIARDEGGKAFFKG) the chain is on the mitochondrial matrix side. R235 serves as a coordination point for ADP. The segment at 235 to 240 (RRRMMM) is important for transport activity. A Nucleotide carrier signature motif motif is present at residues 235–240 (RRRMMM). K268 bears the N6-acetyllysine; alternate mark. K268 is modified (N6-succinyllysine; alternate). Residues 274-291 (AWSNVLRGMGGAFVLVLY) traverse the membrane as a helical segment. At 292-298 (DEIKKYT) the chain is on the mitochondrial intermembrane side.

Belongs to the mitochondrial carrier (TC 2.A.29) family. Monomer. Component of the MMXD complex, which includes CIAO1, ERCC2, CIAO2B, MMS19 and SLC25A5/ANT2. Interacts with AK4. Interacts with TIMM44; leading to inhibit the presequence translocase TIMM23, thereby promoting stabilization of PINK1. In terms of processing, trimethylated by ANTKMT at Lys-52. As to expression, present in kidney, brain, heart, liver and skeletal muscle.

The protein localises to the mitochondrion inner membrane. It is found in the membrane. It catalyses the reaction ADP(in) + ATP(out) = ADP(out) + ATP(in). It carries out the reaction H(+)(in) = H(+)(out). The matrix-open state (m-state) is inhibited by the membrane-permeable bongkrekic acid (BKA). The cytoplasmic-open state (c-state) is inhibited by the membrane-impermeable toxic inhibitor carboxyatractyloside (CATR). Proton transporter activity is inhibited by ADP:ATP antiporter activity. ADP:ATP antiporter that mediates import of ADP into the mitochondrial matrix for ATP synthesis, and export of ATP out to fuel the cell. Cycles between the cytoplasmic-open state (c-state) and the matrix-open state (m-state): operates by the alternating access mechanism with a single substrate-binding site intermittently exposed to either the cytosolic (c-state) or matrix (m-state) side of the inner mitochondrial membrane. In addition to its ADP:ATP antiporter activity, also involved in mitochondrial uncoupling and mitochondrial permeability transition pore (mPTP) activity. Plays a role in mitochondrial uncoupling by acting as a proton transporter: proton transport uncouples the proton flows via the electron transport chain and ATP synthase to reduce the efficiency of ATP production and cause mitochondrial thermogenesis. Proton transporter activity is inhibited by ADP:ATP antiporter activity, suggesting that SLC25A5/ANT2 acts as a master regulator of mitochondrial energy output by maintaining a delicate balance between ATP production (ADP:ATP antiporter activity) and thermogenesis (proton transporter activity). Proton transporter activity requires free fatty acids as cofactor, but does not transport it. Probably mediates mitochondrial uncoupling in tissues that do not express UCP1. Also plays a key role in mPTP opening, a non-specific pore that enables free passage of the mitochondrial membranes to solutes of up to 1.5 kDa, and which contributes to cell death. It is however unclear if SLC25A5/ANT2 constitutes a pore-forming component of mPTP or regulates it. Acts as a regulator of mitophagy independently of ADP:ATP antiporter activity: promotes mitophagy via interaction with TIMM44, leading to inhibit the presequence translocase TIMM23, thereby promoting stabilization of PINK1. As part of the mitotic spindle-associated MMXD complex it may play a role in chromosome segregation. The protein is ADP/ATP translocase 2 of Rattus norvegicus (Rat).